Here is a 543-residue protein sequence, read N- to C-terminus: T-complex protein 1 subunit eta (543 aa).

Methionine 1 carries the post-translational modification N-acetylmethionine. ADP is bound at residue glycine 41. Glycine 41 serves as a coordination point for ATP. Lysine 67 carries the post-translational modification N6-acetyllysine. Aspartate 92 lines the Mg(2+) pocket. The ADP site is built by glycine 93, threonine 94, threonine 95, serine 96, serine 164, and serine 165. Glycine 93 contributes to the ATP binding site. Serine 96 is an ATP binding site. Lysine 250 and lysine 320 each carry N6-acetyllysine. ATP-binding residues include arginine 398 and glycine 409. Glycine 409 serves as a coordination point for ADP. Lysine 430 participates in a covalent cross-link: Glycyl lysine isopeptide (Lys-Gly) (interchain with G-Cter in SUMO2). ADP is bound by residues glutamate 494 and arginine 499. An ATP-binding site is contributed by arginine 499. An Omega-N-methylarginine modification is found at arginine 535.

It belongs to the TCP-1 chaperonin family. Component of the chaperonin-containing T-complex (TRiC), a hexadecamer composed of two identical back-to-back stacked rings enclosing a protein folding chamber. Each ring is made up of eight different subunits: TCP1/CCT1, CCT2, CCT3, CCT4, CCT5, CCT6A/CCT6, CCT7, CCT8. Interacts with PACRG. Interacts with DLEC1.

The protein localises to the cytoplasm. It carries out the reaction ATP + H2O = ADP + phosphate + H(+). In terms of biological role, component of the chaperonin-containing T-complex (TRiC), a molecular chaperone complex that assists the folding of actin, tubulin and other proteins upon ATP hydrolysis. The TRiC complex mediates the folding of WRAP53/TCAB1, thereby regulating telomere maintenance. In Pongo abelii (Sumatran orangutan), this protein is T-complex protein 1 subunit eta (CCT7).